Consider the following 500-residue polypeptide: Cytochrome P450 726A27 (500 aa).

Residues 7–27 form a helical; Signal-anchor for type II membrane protein membrane-spanning segment; that stretch reads IPSYPIIFSFFIFIFMLIKIW. Residue cysteine 440 coordinates heme.

It belongs to the cytochrome P450 family. The cofactor is heme. Expressed in mature seeds.

It is found in the membrane. The catalysed reaction is (-)-casbene + reduced [NADPH--hemoprotein reductase] + O2 = 4-hydroxycasbene + oxidized [NADPH--hemoprotein reductase] + H2O + H(+). The enzyme catalyses 8-hydroxycasbene + reduced [NADPH--hemoprotein reductase] + O2 = 4,8-dihydroxycasbene + oxidized [NADPH--hemoprotein reductase] + H2O + H(+). It catalyses the reaction 4,8-dihydroxycasbene + reduced [NADPH--hemoprotein reductase] + O2 = 4,5,8-trihydroxycasbene + oxidized [NADPH--hemoprotein reductase] + H2O + H(+). It participates in secondary metabolite biosynthesis; terpenoid biosynthesis. Functionally, involved in the biosynthesis of macrocyclic lathyrane type diterpenoids (also called Euphorbia factors) natural products, including the cyclization route from casbene to jolkinol C, a precursor for ingenol mebutate that is used to treat actinic keratosis, a precancerous skin condition. Catalyzes the hydroxylation of (-)-casbene and 8-hydroxycasbene to produce 4-hydroxycasbene and 4,8-dihydroxycasbene, respectively. The chain is Cytochrome P450 726A27 from Euphorbia lathyris (Caper spurge).